Reading from the N-terminus, the 248-residue chain is NAD kinase (248 aa).

The active-site Proton acceptor is the D45. NAD(+)-binding positions include 45–46 (DG), R50, 110–111 (NE), and D138.

It belongs to the NAD kinase family. The cofactor is a divalent metal cation.

The protein resides in the cytoplasm. It catalyses the reaction NAD(+) + ATP = ADP + NADP(+) + H(+). In terms of biological role, involved in the regulation of the intracellular balance of NAD and NADP, and is a key enzyme in the biosynthesis of NADP. Catalyzes specifically the phosphorylation on 2'-hydroxyl of the adenosine moiety of NAD to yield NADP. In Sulfurisphaera tokodaii (strain DSM 16993 / JCM 10545 / NBRC 100140 / 7) (Sulfolobus tokodaii), this protein is NAD kinase.